We begin with the raw amino-acid sequence, 179 residues long: Large ribosomal subunit protein uL5 (179 aa).

Belongs to the universal ribosomal protein uL5 family. In terms of assembly, part of the 50S ribosomal subunit; part of the 5S rRNA/L5/L18/L25 subcomplex. Contacts the 5S rRNA and the P site tRNA. Forms a bridge to the 30S subunit in the 70S ribosome.

Functionally, this is one of the proteins that bind and probably mediate the attachment of the 5S RNA into the large ribosomal subunit, where it forms part of the central protuberance. In the 70S ribosome it contacts protein S13 of the 30S subunit (bridge B1b), connecting the 2 subunits; this bridge is implicated in subunit movement. Contacts the P site tRNA; the 5S rRNA and some of its associated proteins might help stabilize positioning of ribosome-bound tRNAs. In Lachnoclostridium phytofermentans (strain ATCC 700394 / DSM 18823 / ISDg) (Clostridium phytofermentans), this protein is Large ribosomal subunit protein uL5.